The chain runs to 159 residues: Large ribosomal subunit protein eL29 (159 aa).

Over residues 1–26 the composition is skewed to basic residues; the sequence is MAKSKNHTTHNQSRKWHRNGIKKPRS. Positions 1–32 are disordered; it reads MAKSKNHTTHNQSRKWHRNGIKKPRSQRYESL. At Lys-5 the chain carries N6-methyllysine. Residue Ser-31 is modified to Phosphoserine. Position 33 is an N6-acetyllysine (Lys-33). Positions 117–127 are enriched in basic residues; sequence RLCRPKAKAKA. The disordered stretch occupies residues 117-159; sequence RLCRPKAKAKAKAKDQTKAQAAAPASVPAQAPKRTQAPTKASE. The segment covering 134 to 149 has biased composition (low complexity); sequence KAQAAAPASVPAQAPK. Ser-142 bears the Phosphoserine mark.

This sequence belongs to the eukaryotic ribosomal protein eL29 family. In terms of assembly, component of the large ribosomal subunit.

It is found in the cytoplasm. Component of the large ribosomal subunit. The ribosome is a large ribonucleoprotein complex responsible for the synthesis of proteins in the cell. The sequence is that of Large ribosomal subunit protein eL29 (RPL29) from Homo sapiens (Human).